The chain runs to 240 residues: Small ribosomal subunit protein uS3 (240 aa).

Residues 39–109 (IRQHIDANLN…QIRINVVEVN (71 aa)) enclose the KH type-2 domain. The segment at 216-240 (TSAANAAPLPRRKSRRQQFEDRSEQ) is disordered.

Belongs to the universal ribosomal protein uS3 family. As to quaternary structure, part of the 30S ribosomal subunit. Forms a tight complex with proteins S10 and S14.

Its function is as follows. Binds the lower part of the 30S subunit head. Binds mRNA in the 70S ribosome, positioning it for translation. The sequence is that of Small ribosomal subunit protein uS3 from Picosynechococcus sp. (strain ATCC 27264 / PCC 7002 / PR-6) (Agmenellum quadruplicatum).